Reading from the N-terminus, the 382-residue chain is Alkanesulfonate monooxygenase (382 aa).

The protein belongs to the SsuD family.

It carries out the reaction an alkanesulfonate + FMNH2 + O2 = an aldehyde + FMN + sulfite + H2O + 2 H(+). Functionally, catalyzes the desulfonation of aliphatic sulfonates. The polypeptide is Alkanesulfonate monooxygenase (Pseudomonas putida (strain ATCC 700007 / DSM 6899 / JCM 31910 / BCRC 17059 / LMG 24140 / F1)).